A 1320-amino-acid chain; its full sequence is Collagen alpha-1(XX) chain (1320 aa).

Residues 1 to 25 (MSLQGSYQHFCLWMFLGTTLALGQG) form the signal peptide. Positions 27–118 (VSSRLRLAVL…EFVIEDLKSQ (92 aa)) constitute a Fibronectin type-III 1 domain. Residues 177–352 (DIIFLVDGSW…DTLAPLLSRL (176 aa)) form the VWFA domain. Fibronectin type-III domains lie at 377–466 (TPTR…APLP), 467–556 (PPGP…SALG), 557–644 (PPRH…TQKA), 646–735 (SPGQ…TPSA), and 740–831 (PPSS…ACPA). Asn-433 carries an N-linked (GlcNAc...) asparagine glycan. N-linked (GlcNAc...) asparagine glycosylation is found at Asn-569 and Asn-604. The interval 728 to 752 (SLRYTPSAASRSPPSSLALSSETPN) is disordered. The segment covering 733-748 (PSAASRSPPSSLALSS) has biased composition (low complexity). An N-linked (GlcNAc...) asparagine glycan is attached at Asn-771. The Laminin G-like domain maps to 840 to 1035 (GFDLMVAFGL…LQMLQIVCSD (196 aa)). Disordered regions lie at residues 1064 to 1220 (YSSE…EKGE) and 1291 to 1320 (LRPE…ESLE). The segment covering 1069 to 1080 (PGPPGPQGPPGL) has biased composition (pro residues). 3 Collagen-like domains span residues 1069 to 1122 (PGPP…TQGR), 1125 to 1174 (QGPM…GPAG), and 1165 to 1221 (GMRG…KGEP). Low complexity predominate over residues 1081–1093 (PGRNGPPGQQGHP). The segment covering 1106–1115 (GPEGPGGQQG) has biased composition (gly residues). The span at 1140 to 1152 (QGLSGLQGLSGQQ) shows a compositional bias: low complexity. Over residues 1302–1320 (ISHTSNPRLQEVQTPESLE) the composition is skewed to polar residues.

It localises to the secreted. The protein localises to the extracellular space. Probable collagen protein. The sequence is that of Collagen alpha-1(XX) chain (Col20a1) from Mus musculus (Mouse).